The following is a 217-amino-acid chain: Ribosomal large subunit pseudouridine synthase E (217 aa).

D79 functions as the Nucleophile in the catalytic mechanism.

Belongs to the pseudouridine synthase RsuA family.

It carries out the reaction uridine(2457) in 23S rRNA = pseudouridine(2457) in 23S rRNA. Its function is as follows. Responsible for synthesis of pseudouridine from uracil-2457 in 23S ribosomal RNA. This Escherichia coli O6:H1 (strain CFT073 / ATCC 700928 / UPEC) protein is Ribosomal large subunit pseudouridine synthase E (rluE).